We begin with the raw amino-acid sequence, 499 residues long: BTB/POZ domain-containing protein At5g60050 (499 aa).

Low complexity predominate over residues 18–30; it reads PSLSFSPSRISSP. Residues 18 to 57 are disordered; sequence PSLSFSPSRISSPIKLSTASPPLPPPPPPPPNESTLSNPT. The segment covering 38 to 49 has biased composition (pro residues); it reads PPLPPPPPPPPN. One can recognise a BTB domain in the interval 99–172; it reads GDVKLTVVGK…MYSDDLKKKL (74 aa).

It participates in protein modification; protein ubiquitination. Its function is as follows. May act as a substrate-specific adapter of an E3 ubiquitin-protein ligase complex (CUL3-RBX1-BTB) which mediates the ubiquitination and subsequent proteasomal degradation of target proteins. This is BTB/POZ domain-containing protein At5g60050 from Arabidopsis thaliana (Mouse-ear cress).